A 168-amino-acid chain; its full sequence is Lipoprotein signal peptidase (168 aa).

The next 3 helical transmembrane spans lie at 15–35, 69–89, and 95–115; these read AIAA…LGLL, WGRW…AVWV, and PLLA…NLID. Residues D124 and D141 contribute to the active site. Residues 133-153 form a helical membrane-spanning segment; it reads FPWVFNIADSGISVGVALLLL.

This sequence belongs to the peptidase A8 family.

The protein resides in the cell inner membrane. It carries out the reaction Release of signal peptides from bacterial membrane prolipoproteins. Hydrolyzes -Xaa-Yaa-Zaa-|-(S,diacylglyceryl)Cys-, in which Xaa is hydrophobic (preferably Leu), and Yaa (Ala or Ser) and Zaa (Gly or Ala) have small, neutral side chains.. The protein operates within protein modification; lipoprotein biosynthesis (signal peptide cleavage). Functionally, this protein specifically catalyzes the removal of signal peptides from prolipoproteins. This chain is Lipoprotein signal peptidase, found in Caulobacter vibrioides (strain ATCC 19089 / CIP 103742 / CB 15) (Caulobacter crescentus).